The sequence spans 323 residues: Aspartate carbamoyltransferase catalytic subunit (323 aa).

Carbamoyl phosphate contacts are provided by Arg71 and Thr72. L-aspartate is bound at residue Lys99. Carbamoyl phosphate is bound by residues Arg121, His151, and Gln154. Arg184 and Arg239 together coordinate L-aspartate. Carbamoyl phosphate-binding residues include Gly280 and Pro281.

This sequence belongs to the aspartate/ornithine carbamoyltransferase superfamily. ATCase family. As to quaternary structure, heterododecamer (2C3:3R2) of six catalytic PyrB chains organized as two trimers (C3), and six regulatory PyrI chains organized as three dimers (R2).

It carries out the reaction carbamoyl phosphate + L-aspartate = N-carbamoyl-L-aspartate + phosphate + H(+). Its pathway is pyrimidine metabolism; UMP biosynthesis via de novo pathway; (S)-dihydroorotate from bicarbonate: step 2/3. Catalyzes the condensation of carbamoyl phosphate and aspartate to form carbamoyl aspartate and inorganic phosphate, the committed step in the de novo pyrimidine nucleotide biosynthesis pathway. This Cupriavidus metallidurans (strain ATCC 43123 / DSM 2839 / NBRC 102507 / CH34) (Ralstonia metallidurans) protein is Aspartate carbamoyltransferase catalytic subunit.